Here is a 122-residue protein sequence, read N- to C-terminus: Large ribosomal subunit protein uL14c (122 aa).

Belongs to the universal ribosomal protein uL14 family. In terms of assembly, part of the 50S ribosomal subunit.

The protein resides in the plastid. Its subcellular location is the chloroplast. Binds to 23S rRNA. The chain is Large ribosomal subunit protein uL14c from Gossypium barbadense (Sea Island cotton).